The following is a 96-amino-acid chain: Uteroglobin (96 aa).

An N-terminal signal peptide occupies residues 1–19; the sequence is MKIAITITVLMLSICCSSA.

It belongs to the secretoglobin family. Antiparallel homodimer; disulfide-linked. Interaction with LMBR1L is controversial. Club cells (nonciliated cells of the surface epithelium of the pulmonary airways).

Its subcellular location is the secreted. Binds phosphatidylcholine, phosphatidylinositol, polychlorinated biphenyls (PCB) and weakly progesterone, potent inhibitor of phospholipase A2. This is Uteroglobin (Scgb1a1) from Rattus norvegicus (Rat).